Reading from the N-terminus, the 175-residue chain is uncharacterized protein (175 aa).

Belongs to the asfivirus B175L family.

This is an uncharacterized protein from African swine fever virus (strain Badajoz 1971 Vero-adapted) (Ba71V).